Consider the following 305-residue polypeptide: Putative monooxygenase p33MONOX (305 aa).

Residues 37–56 (LEDPAPMTPPPSDMGSVPWK) are disordered. Threonine 44 is subject to Phosphothreonine. A Flavin-containing monooxygenase motif motif is present at residues 67–77 (LAKVEEGEASL). Disordered regions lie at residues 158 to 236 (QSGE…KYDS) and 259 to 305 (QANR…PTGF). Over residues 169 to 183 (PASAQSTPSTTPHSS) the composition is skewed to low complexity. Threonine 175 is subject to Phosphothreonine. Phosphoserine is present on residues serine 182 and serine 183. A compositionally biased stretch (polar residues) spans 193-210 (TSGSSTALPGPNPSTMDS).

The protein belongs to the P33MONOX family. In terms of assembly, interacts with NELFB, NOL12 and PRNP. Down-regulated in the occipital lobe of an early stage Alzheimer disease patients.

The protein localises to the cytoplasm. Potential NADPH-dependent oxidoreductase. May be involved in the regulation of neuronal survival, differentiation and axonal outgrowth. This Homo sapiens (Human) protein is Putative monooxygenase p33MONOX (KIAA1191).